The chain runs to 341 residues: Phenylalanine--tRNA ligase alpha subunit (341 aa).

E254 provides a ligand contact to Mg(2+).

It belongs to the class-II aminoacyl-tRNA synthetase family. Phe-tRNA synthetase alpha subunit type 1 subfamily. As to quaternary structure, tetramer of two alpha and two beta subunits. Mg(2+) is required as a cofactor.

It localises to the cytoplasm. The enzyme catalyses tRNA(Phe) + L-phenylalanine + ATP = L-phenylalanyl-tRNA(Phe) + AMP + diphosphate + H(+). The chain is Phenylalanine--tRNA ligase alpha subunit (pheS) from Mycoplasma pneumoniae (strain ATCC 29342 / M129 / Subtype 1) (Mycoplasmoides pneumoniae).